Consider the following 322-residue polypeptide: Ferrochelatase (322 aa).

Fe cation is bound by residues His193 and Glu274.

It belongs to the ferrochelatase family.

The protein resides in the cytoplasm. It carries out the reaction heme b + 2 H(+) = protoporphyrin IX + Fe(2+). Its pathway is porphyrin-containing compound metabolism; protoheme biosynthesis; protoheme from protoporphyrin-IX: step 1/1. Its function is as follows. Catalyzes the ferrous insertion into protoporphyrin IX. This Aliivibrio fischeri (strain MJ11) (Vibrio fischeri) protein is Ferrochelatase.